Here is a 289-residue protein sequence, read N- to C-terminus: MDVGFSGLPDVSQSHSKTLWGARGRGPSIRRQREFMPEEKKDTVYWEKRRKNNEAAKRSREKRRLNDAAIEGRLAALMEENALLKGELKALKLRFGLLPLTGGPRALPLQALLLEAPWTGDPRPGAEALSSLSGSHSCLLRPRSLDAGIPGCRGCLLAPRWTGLATSPRSPQESASPTLNRIDMALQTALPPALFSCHLLEGHVGSRPELRPCWGLWSPVPSGCRASGPSDVLLTPTADPMGLSPGVTCPAPGNSPEGLGQPSLPHKLRIKSRASGRVPRGWEGGQAPL.

The disordered stretch occupies residues 1–27 (MDVGFSGLPDVSQSHSKTLWGARGRGP). The bZIP domain occupies 42–105 (DTVYWEKRRK…GLLPLTGGPR (64 aa)). Residues 48-64 (KRRKNNEAAKRSREKRR) are basic motif. The tract at residues 70 to 91 (IEGRLAALMEENALLKGELKAL) is leucine-zipper.

Belongs to the bZIP family. NFIL3 subfamily.

It is found in the nucleus. The chain is NFIL3 like protein from Homo sapiens (Human).